A 208-amino-acid chain; its full sequence is 3-demethoxyubiquinol 3-hydroxylase (208 aa).

Fe cation contacts are provided by Glu-57, Glu-87, His-90, Glu-139, Glu-171, and His-174.

Belongs to the COQ7 family. Fe cation serves as cofactor.

Its subcellular location is the cell membrane. It catalyses the reaction a 5-methoxy-2-methyl-3-(all-trans-polyprenyl)benzene-1,4-diol + AH2 + O2 = a 3-demethylubiquinol + A + H2O. The protein operates within cofactor biosynthesis; ubiquinone biosynthesis. In terms of biological role, catalyzes the hydroxylation of 2-nonaprenyl-3-methyl-6-methoxy-1,4-benzoquinol during ubiquinone biosynthesis. The polypeptide is 3-demethoxyubiquinol 3-hydroxylase (Burkholderia vietnamiensis (strain G4 / LMG 22486) (Burkholderia cepacia (strain R1808))).